We begin with the raw amino-acid sequence, 225 residues long: Methylthioribulose-1-phosphate dehydratase (225 aa).

Residues histidine 106 and histidine 108 each coordinate Zn(2+).

The protein belongs to the aldolase class II family. MtnB subfamily. Zn(2+) is required as a cofactor.

The enzyme catalyses 5-(methylsulfanyl)-D-ribulose 1-phosphate = 5-methylsulfanyl-2,3-dioxopentyl phosphate + H2O. It participates in amino-acid biosynthesis; L-methionine biosynthesis via salvage pathway; L-methionine from S-methyl-5-thio-alpha-D-ribose 1-phosphate: step 2/6. In terms of biological role, catalyzes the dehydration of methylthioribulose-1-phosphate (MTRu-1-P) into 2,3-diketo-5-methylthiopentyl-1-phosphate (DK-MTP-1-P). This Xanthomonas oryzae pv. oryzae (strain KACC10331 / KXO85) protein is Methylthioribulose-1-phosphate dehydratase.